The sequence spans 162 residues: MKRIEIFTDGACSGNPGPGGWGAILRYNGTEKELYGGEADTTNNRMELTAAIEALEALKEPCEVDLHTDSNYLRDGISGWIEGWKRNGWRTADRKPVKNAELWQALDEARRRHKVHWHWVRGHAGHPENERADALARAGMAPFKKKKGGDTASSEEGSARRR.

In terms of domain architecture, RNase H type-1 spans 1–141 (MKRIEIFTDG…ADALARAGMA (141 aa)). Mg(2+) contacts are provided by Asp-9, Glu-47, Asp-69, and Asp-133. The disordered stretch occupies residues 139–162 (GMAPFKKKKGGDTASSEEGSARRR).

This sequence belongs to the RNase H family. Monomer. Mg(2+) is required as a cofactor.

The protein resides in the cytoplasm. The catalysed reaction is Endonucleolytic cleavage to 5'-phosphomonoester.. Endonuclease that specifically degrades the RNA of RNA-DNA hybrids. This is Ribonuclease H from Chelativorans sp. (strain BNC1).